The sequence spans 1016 residues: Rho family-interacting cell polarization regulator 2 (1016 aa).

Phosphoserine is present on residues S21 and S37. Residues 44–73 are disordered; sequence AVKKPQAKLKKMHNLGHKNSSPPKEPQPKR. Residues 48–59 are compositionally biased toward basic residues; it reads PQAKLKKMHNLG. Residues 55–113 are involved in cell filopodia formation; the sequence is MHNLGHKNSSPPKEPQPKRVEEVYRALKNGLDEYLEVHQTELDKLTTQLKDMRRNSRLG. A coiled-coil region spans residues 85-112; that stretch reads LDEYLEVHQTELDKLTTQLKDMRRNSRL. S341 is subject to Phosphoserine. Positions 414 to 428 are enriched in polar residues; sequence TSTELPPGSQSSQNE. The disordered stretch occupies residues 414–469; that stretch reads TSTELPPGSQSSQNEGLKDSSSASCSSSSREGSEPRPHPEGETQGLGKPEGCPVAT. Low complexity predominate over residues 433–442; the sequence is SSSASCSSSS. Residues 444–454 are compositionally biased toward basic and acidic residues; it reads EGSEPRPHPEG. Residues S520 and S532 each carry the phosphoserine modification. The tract at residues 636–656 is disordered; the sequence is DSVFSDTETEKNSYRSVHPEA. A compositionally biased stretch (basic and acidic residues) spans 643–656; it reads ETEKNSYRSVHPEA.

It belongs to the RIPOR family. As to quaternary structure, homooligomer; homooligomerization is regulated by RHOC and leads to the formation of concatemers through the association of N- and C-termini. Interacts (phosphorylated form) with 14-3-3 proteins; these interactions occur during myogenic cell differentiation and also induces T cell proliferation arrest. Interacts (phosphorylated form) with HDAC6; this interaction occurs during early myogenic differentiation, prevents HDAC6 to deacetylate tubulin and also induces T cell proliferation arrest. Interacts with DYSF; this interaction occurs during early myogenic differentiation. Interacts with MYOF. Interacts (via active GTP- or inactive GDP-bound forms) with RHOA; this interaction is direct, blocks the loading of GTP to RHOA and decreases upon chemokine CCL19 stimulation in primary T lymphocytes. Interacts with RHOC. Interacts (via phosphorylated form) with YWHAB; this interaction occurs in a chemokine-dependent manner and does not compete for binding of RIPOR2 with RHOA nor blocks inhibition of RIPOR2-mediated RHOA activity. Interacts with YWHAE. Interacts with YWHAQ. Post-translationally, phosphorylated. Chemokine-induced phosphorylation in neutrophils occurs in a PKC- and AKT-dependent manner, resulting in RIPOR2 interaction with YWHAB and stabilization. Phosphorylated by PKCA, AKT1 and MAPKAPK1A; in vitro.

It is found in the cytoplasm. The protein resides in the cytoskeleton. It localises to the cell projection. The protein localises to the filopodium. Its subcellular location is the apical cell membrane. It is found in the stereocilium. The protein resides in the stereocilium membrane. Acts as an inhibitor of the small GTPase RHOA and plays several roles in the regulation of myoblast and hair cell differentiation, lymphocyte T proliferation and neutrophil polarization. Plays a role in fetal mononuclear myoblast differentiation by promoting filopodia and myotube formation. Maintains naive T lymphocytes in a quiescent state and prevents chemokine-induced T lymphocyte responses, such as cell adhesion, polarization and migration. Involved also in the regulation of neutrophil polarization, chemotaxis and adhesion. Required for normal development of inner and outer hair cell stereocilia within the cochlea of the inner ear. Plays a role for maintaining the structural organization of the basal domain of stereocilia. Involved in mechanosensory hair cell function. Required for normal hearing. This Bos taurus (Bovine) protein is Rho family-interacting cell polarization regulator 2.